The following is a 401-amino-acid chain: Lipoyl synthase 1, mitochondrial (401 aa).

The N-terminal 25 residues, 1 to 25 (MWSSSSSLCRNPSFRRAWLSTVTVT), are a transit peptide targeting the mitochondrion. Residues 49–79 (IDDFSSTNAPTTTTHYTSSNGSPIVRQKAAP) form a disordered region. Polar residues predominate over residues 51–70 (DFSSTNAPTTTTHYTSSNGS). [4Fe-4S] cluster-binding residues include Cys117, Cys122, Cys128, Cys148, Cys152, Cys155, and Ser376. The Radical SAM core domain occupies 133-365 (EDQTATATIM…QETAMGMGFA (233 aa)).

Belongs to the radical SAM superfamily. Lipoyl synthase family. [4Fe-4S] cluster is required as a cofactor.

It is found in the mitochondrion. The catalysed reaction is [[Fe-S] cluster scaffold protein carrying a second [4Fe-4S](2+) cluster] + N(6)-octanoyl-L-lysyl-[protein] + 2 oxidized [2Fe-2S]-[ferredoxin] + 2 S-adenosyl-L-methionine + 4 H(+) = [[Fe-S] cluster scaffold protein] + N(6)-[(R)-dihydrolipoyl]-L-lysyl-[protein] + 4 Fe(3+) + 2 hydrogen sulfide + 2 5'-deoxyadenosine + 2 L-methionine + 2 reduced [2Fe-2S]-[ferredoxin]. It participates in protein modification; protein lipoylation via endogenous pathway; protein N(6)-(lipoyl)lysine from octanoyl-[acyl-carrier-protein]: step 2/2. Functionally, catalyzes the radical-mediated insertion of two sulfur atoms into the C-6 and C-8 positions of the octanoyl moiety bound to the lipoyl domains of lipoate-dependent enzymes, thereby converting the octanoylated domains into lipoylated derivatives. This Phaeodactylum tricornutum (strain CCAP 1055/1) protein is Lipoyl synthase 1, mitochondrial.